The following is a 421-amino-acid chain: MRWILFIGALIGSSICGQEKFFGDQVLRINVRNGDEISKLSQLVNSNNLKLNFWKSPSSFNRPVDVLVPSVSLQAFKSFLRSQGLEYAVTIEDLQALLDNEDDEMQHNEGQERSSNNFNYGAYHSLEAIYHEMDNIAADFPDLARRVKIGHSFENRPMYVLKFSTGKGVRRPAVWLNAGIHSREWISQATAIWTARKIVSDYQRDPAITSILEKMDIFLLPVANPDGYVYTQTQNRLWRKTRSRNPGSSCIGADPNRNWNASFAGKGASDNPCSEVYHGPHANSEVEVKSVVDFIQKHGNFKGFIDLHSYSQLLMYPYGYSVKKAPDAEELDKVARLAAKALASVSGTEYQVGPTCTTVYPASGSSIDWAYDNGIKFAFTFELRDTGTYGFLLPANQIIPTAEETWLGLKTIMEHVRDNLY.

Residues 1–16 (MRWILFIGALIGSSIC) form the signal peptide. The propeptide at 17-113 (GQEKFFGDQV…EMQHNEGQER (97 aa)) is activation peptide. Residues P69, V71, N119, Y123, H124, S125, E127, and F163 each contribute to the a protein site. In terms of domain architecture, Peptidase M14 spans 122–416 (AYHSLEAIYH…LGLKTIMEHV (295 aa)). Positions 181 and 184 each coordinate Zn(2+). 3 residues coordinate a protein: R196, K197, and S248. C250 and C273 form a disulfide bridge. The N-linked (GlcNAc...) asparagine glycan is linked to N260. An a protein-binding site is contributed by D270. Zn(2+) is bound at residue H308. The Proton donor/acceptor role is filled by E382.

The protein belongs to the peptidase M14 family. As to quaternary structure, monomer. Interacts with LXN. The cofactor is Zn(2+). As to expression, fetal expression in the adrenal gland, brain, heart, intestine, kidney, liver and lung. Except for fetal brain that shows no imprinting, expression was found preferentially from the maternal allele.

Its subcellular location is the secreted. Its activity is regulated as follows. Inhibited by interaction with the metallocarboxypeptidase inhibitor (MCPI) from N.versicolor that binds to the catalytic zinc ion. Also inhibited by interaction with the S.magnifica carboxypeptidase inhibitor SmCI that penetrates the active site groove and inhibits activity by emulating a C-terminal substrate. Additionally inhibited by a carboxypeptidase inhibitor from H.medicinalis (leech) and R.bursa (tick). In terms of biological role, metalloprotease that cleaves hydrophobic C-terminal residues with a preference for -Phe, -Leu, -Ile, -Met, -Tyr and -Val. May function in peptide hormone and/or neuropeptide catabolism. The protein is Carboxypeptidase A4 (CPA4) of Homo sapiens (Human).